The sequence spans 662 residues: MGGFKLVSNFKPTGDQPQAIEKLVEGVRRGYRYQTLLGVTGSGKTFTMANIIARLNRPTLVIAHNKTLAAQLYSEFKEFFPENAVEYFVSYYDYYQPEAYVPETDTYIEKDASINEEIDKLRHSATAALFERRDVIIVASVSCIYGLGDPIDYENLMLSLRPGMVKDRDEIIRKLVEIQYERNDINFTRGKFRVRGDVIEVFPASFSNKAIRIELFGDEIDRIAEIDVLTGEVLGYRKHVAIFPASHYATSRDKLERAIKSIREELEERYKELKEMGKIVEAERLWQRTNYDLEMLQEMGYCKGIENYSRHISGRPPGSPPYTLLDYFPEDFLIFIDESHVTIPQLRGMYNGDRSRKEALVEYGFRLPSAYDNRPLTFEEFEQRVNQVIFVSATPGPYEMEHSEQVVEQLIRPTGLVDPEVIVRPVKGQVDDLIAEIRKTVAKGYRVLVTTLTKKMAEDLSDYLKEMGIRVRYLHSDIETIERVEIIRDLRLGKFDVLIGINLLREGLDIPEVALVAILDADKEGFLRSETSLIQTIGRAARNAEGRVIMYADTITNSMRRAIDETNRRRKIQMEYNEKHGIVPKTVVKGVRDVIQATQVAEKEEKYEKTANFYDPDVIKSTIEQLEKEMRQAAIELQFEKAAKLRDMILELRKQLEEVSLR.

The region spanning 25 to 412 (EGVRRGYRYQ…SEQVVEQLIR (388 aa)) is the Helicase ATP-binding domain. 38-45 (GVTGSGKT) is an ATP binding site. The Beta-hairpin signature appears at 91-114 (YYDYYQPEAYVPETDTYIEKDASI). One can recognise a Helicase C-terminal domain in the interval 429–595 (QVDDLIAEIR…TVVKGVRDVI (167 aa)). The UVR domain maps to 620 to 655 (KSTIEQLEKEMRQAAIELQFEKAAKLRDMILELRKQ).

The protein belongs to the UvrB family. As to quaternary structure, forms a heterotetramer with UvrA during the search for lesions. Interacts with UvrC in an incision complex.

It localises to the cytoplasm. The UvrABC repair system catalyzes the recognition and processing of DNA lesions. A damage recognition complex composed of 2 UvrA and 2 UvrB subunits scans DNA for abnormalities. Upon binding of the UvrA(2)B(2) complex to a putative damaged site, the DNA wraps around one UvrB monomer. DNA wrap is dependent on ATP binding by UvrB and probably causes local melting of the DNA helix, facilitating insertion of UvrB beta-hairpin between the DNA strands. Then UvrB probes one DNA strand for the presence of a lesion. If a lesion is found the UvrA subunits dissociate and the UvrB-DNA preincision complex is formed. This complex is subsequently bound by UvrC and the second UvrB is released. If no lesion is found, the DNA wraps around the other UvrB subunit that will check the other stand for damage. In Caldanaerobacter subterraneus subsp. tengcongensis (strain DSM 15242 / JCM 11007 / NBRC 100824 / MB4) (Thermoanaerobacter tengcongensis), this protein is UvrABC system protein B.